The sequence spans 147 residues: UPF0460 protein in nifX-nifW intergenic region (147 aa).

The protein belongs to the UPF0460 family.

The chain is UPF0460 protein in nifX-nifW intergenic region from Frankia alni.